Consider the following 62-residue polypeptide: Large ribosomal subunit protein bL28 (62 aa).

This sequence belongs to the bacterial ribosomal protein bL28 family.

The sequence is that of Large ribosomal subunit protein bL28 from Acidothermus cellulolyticus (strain ATCC 43068 / DSM 8971 / 11B).